Consider the following 294-residue polypeptide: Light-independent protochlorophyllide reductase iron-sulfur ATP-binding protein (294 aa).

Residues 10-15 (GIGKST) and K39 each bind ATP. A Mg(2+)-binding site is contributed by S14. [4Fe-4S] cluster is bound by residues C95 and C129. 180 to 181 (NR) provides a ligand contact to ATP.

Belongs to the NifH/BchL/ChlL family. Homodimer. Protochlorophyllide reductase is composed of three subunits; ChlL, ChlN and ChlB. Requires [4Fe-4S] cluster as cofactor.

It is found in the plastid. The protein resides in the chloroplast. It catalyses the reaction chlorophyllide a + oxidized 2[4Fe-4S]-[ferredoxin] + 2 ADP + 2 phosphate = protochlorophyllide a + reduced 2[4Fe-4S]-[ferredoxin] + 2 ATP + 2 H2O. It functions in the pathway porphyrin-containing compound metabolism; chlorophyll biosynthesis (light-independent). Its function is as follows. Component of the dark-operative protochlorophyllide reductase (DPOR) that uses Mg-ATP and reduced ferredoxin to reduce ring D of protochlorophyllide (Pchlide) to form chlorophyllide a (Chlide). This reaction is light-independent. The L component serves as a unique electron donor to the NB-component of the complex, and binds Mg-ATP. This is Light-independent protochlorophyllide reductase iron-sulfur ATP-binding protein from Pleurastrum terricola (Filamentous green alga).